The sequence spans 292 residues: UDP-3-O-acyl-N-acetylglucosamine deacetylase (292 aa).

Zn(2+) is bound by residues H75, H231, and D235. The active-site Proton donor is H258.

This sequence belongs to the LpxC family. Zn(2+) serves as cofactor.

It catalyses the reaction a UDP-3-O-[(3R)-3-hydroxyacyl]-N-acetyl-alpha-D-glucosamine + H2O = a UDP-3-O-[(3R)-3-hydroxyacyl]-alpha-D-glucosamine + acetate. It participates in glycolipid biosynthesis; lipid IV(A) biosynthesis; lipid IV(A) from (3R)-3-hydroxytetradecanoyl-[acyl-carrier-protein] and UDP-N-acetyl-alpha-D-glucosamine: step 2/6. Functionally, catalyzes the hydrolysis of UDP-3-O-myristoyl-N-acetylglucosamine to form UDP-3-O-myristoylglucosamine and acetate, the committed step in lipid A biosynthesis. The chain is UDP-3-O-acyl-N-acetylglucosamine deacetylase from Nautilia profundicola (strain ATCC BAA-1463 / DSM 18972 / AmH).